We begin with the raw amino-acid sequence, 274 residues long: 5'-3' exoribonuclease (274 aa).

Mn(2+)-binding residues include His8, His10, Asp15, His40, Glu65, His76, His190, Asp247, and His249.

Belongs to the PHP family. TrpH/YciV subfamily. The cofactor is Mn(2+).

The catalysed reaction is a ribonucleoside 3',5'-bisphosphate + H2O = a ribonucleoside 5'-phosphate + phosphate. In terms of biological role, efficiently catalyzes the hydrolysis of the 3'-phosphate from 3',5'-bis-phosphonucleotides as well as the successive hydrolysis of 5'-phosphomononucleotides from the 5'-end of short pieces of RNA and DNA, with no specificity toward the identity of the nucleotide base. Is more efficient at hydrolyzing RNA oligonucleotides than DNA oligonucleotides. This enzyme can also hydrolyze annealed DNA duplexes, albeit at a catalytic efficiency lower than that of the corresponding single-stranded oligonucleotides. The chain is 5'-3' exoribonuclease from Haemophilus influenzae (strain ATCC 51907 / DSM 11121 / KW20 / Rd).